Here is a 129-residue protein sequence, read N- to C-terminus: Glycine cleavage system H protein (129 aa).

The Lipoyl-binding domain maps to 24 to 106 (TFTVGITEHA…FGDGWLFRIK (83 aa)). Lys65 bears the N6-lipoyllysine mark.

This sequence belongs to the GcvH family. In terms of assembly, the glycine cleavage system is composed of four proteins: P, T, L and H. Requires (R)-lipoate as cofactor.

Functionally, the glycine cleavage system catalyzes the degradation of glycine. The H protein shuttles the methylamine group of glycine from the P protein to the T protein. This chain is Glycine cleavage system H protein, found in Pseudoalteromonas translucida (strain TAC 125).